A 131-amino-acid polypeptide reads, in one-letter code: Putative pre-16S rRNA nuclease (131 aa).

The protein belongs to the YqgF nuclease family.

The protein resides in the cytoplasm. Could be a nuclease involved in processing of the 5'-end of pre-16S rRNA. This chain is Putative pre-16S rRNA nuclease, found in Bordetella petrii (strain ATCC BAA-461 / DSM 12804 / CCUG 43448).